Here is a 383-residue protein sequence, read N- to C-terminus: G-protein coupled receptor E1 (383 aa).

The next 9 helical transmembrane spans lie at 13 to 35 (SSLA…TTIA), 78 to 98 (LYLL…IIVI), 109 to 129 (MLLL…PFWM), 160 to 180 (VFCI…AVTA), 190 to 210 (IVTC…EFFF), 242 to 262 (VIML…YVII), 279 to 299 (LIFV…IVLL), 323 to 343 (LITK…YAFV), and 351 to 371 (LYHF…PFLS). The cysteines at positions 145 and 222 are disulfide-linked.

The protein belongs to the G-protein coupled receptor 1 family.

The protein localises to the host membrane. This Equine herpesvirus 2 (strain 86/87) (EHV-2) protein is G-protein coupled receptor E1 (E1).